The sequence spans 111 residues: Large ribosomal subunit protein uL22 (111 aa).

It belongs to the universal ribosomal protein uL22 family. In terms of assembly, part of the 50S ribosomal subunit.

In terms of biological role, this protein binds specifically to 23S rRNA; its binding is stimulated by other ribosomal proteins, e.g. L4, L17, and L20. It is important during the early stages of 50S assembly. It makes multiple contacts with different domains of the 23S rRNA in the assembled 50S subunit and ribosome. The globular domain of the protein is located near the polypeptide exit tunnel on the outside of the subunit, while an extended beta-hairpin is found that lines the wall of the exit tunnel in the center of the 70S ribosome. In Thermoanaerobacter pseudethanolicus (strain ATCC 33223 / 39E) (Clostridium thermohydrosulfuricum), this protein is Large ribosomal subunit protein uL22.